The primary structure comprises 241 residues: Ras-like protein 1 (241 aa).

GTP-binding positions include 17–22 (GVGKTA), 33–39 (VETYDPT), 63–64 (AG), 138–141 (NKSD), and 168–170 (SAK). An Effector region motif is present at residues 36 to 44 (YDPTIEDSY). The disordered stretch occupies residues 190 to 241 (RQQASRPSLPGNSRTKTGGMGKSESFYQSDGKRGSRKDGEKHRSKPIKCVIL). Over residues 191-205 (QQASRPSLPGNSRTK) the composition is skewed to polar residues. The span at 219 to 230 (DGKRGSRKDGEK) shows a compositional bias: basic and acidic residues. Cysteine 238 carries the cysteine methyl ester modification. Cysteine 238 carries the S-farnesyl cysteine lipid modification. A propeptide spans 239–241 (VIL) (removed in mature form).

This sequence belongs to the small GTPase superfamily. Ras family. Interacts with farnesyltransferase beta subunit RAM1.

It is found in the cell membrane. With respect to regulation, alternates between an inactive form bound to GDP and an active form bound to GTP. Activated by a guanine nucleotide-exchange factor (GEF) and inactivated by a GTPase-activating protein (GAP). In terms of biological role, modulates the activity of the adenylate cyclase catalytic subunit and therefore affects the biosynthesis of cyclic-AMP. Plays a role in both surface attachment and surface recognition of appressoria, a highly specialized infection structure for plant penetration. Regulates appressorium formation by coordinated regulation of cAMP signaling and Pmk1 MAPK pathways. This chain is Ras-like protein 1, found in Pyricularia oryzae (strain 70-15 / ATCC MYA-4617 / FGSC 8958) (Rice blast fungus).